The sequence spans 299 residues: MKFEKMHGLGNDFILMKDFQRNYPDLAKRLCDRRFGIGADGLVIYSSCKNSNINADYQMRIYNSDGSEAEMCGNAIRCLAKYLAKTEETDGKRLAIATTAGIKRVEIVENFDLMGEINLSGMVGSQEQLVKVNMEKPLLKSSDIPLAVKNDRNDIARQRPIDTPYGIYYLTEVSTGPPHAVIFVQNLLPEEQLLELGPIIEKHDLFPYGTNVEFVKVESSNHLRVQVWERGAGKTLACGTGACAVVVAATINGFCNGMAYVELPGGKLFINWDNNTEELYMIGPAEHVYSGELNNQIFY.

2 residues coordinate substrate: Asn11 and Asn63. The active-site Proton donor is the Cys72. Substrate contacts are provided by residues 73–74, Asn211, and 229–230; these read GN and ER. The active-site Proton acceptor is the Cys238. 239-240 is a binding site for substrate; sequence GT.

It belongs to the diaminopimelate epimerase family. In terms of assembly, homodimer.

The protein localises to the cytoplasm. It catalyses the reaction (2S,6S)-2,6-diaminopimelate = meso-2,6-diaminopimelate. Its pathway is amino-acid biosynthesis; L-lysine biosynthesis via DAP pathway; DL-2,6-diaminopimelate from LL-2,6-diaminopimelate: step 1/1. Functionally, catalyzes the stereoinversion of LL-2,6-diaminopimelate (L,L-DAP) to meso-diaminopimelate (meso-DAP), a precursor of L-lysine and an essential component of the bacterial peptidoglycan. The polypeptide is Diaminopimelate epimerase (Natranaerobius thermophilus (strain ATCC BAA-1301 / DSM 18059 / JW/NM-WN-LF)).